An 81-amino-acid chain; its full sequence is uncharacterized protein (81 aa).

The segment at 11 to 34 (GSVSSSNKVSVANGSSSSSFGSNG) is disordered.

This is an uncharacterized protein from Dictyostelium discoideum (Social amoeba).